Reading from the N-terminus, the 855-residue chain is Valine--tRNA ligase (855 aa).

Residues 44–54 (PNVTGVLHIGH) carry the 'HIGH' region motif. The 'KMSKS' region motif lies at 524 to 528 (KMSKT). K527 is an ATP binding site. A coiled-coil region spans residues 797 to 827 (KVEEDPARKQKEREQLEKNIANSKRQLGDEV).

It belongs to the class-I aminoacyl-tRNA synthetase family. ValS type 1 subfamily. In terms of assembly, monomer.

The protein resides in the cytoplasm. It catalyses the reaction tRNA(Val) + L-valine + ATP = L-valyl-tRNA(Val) + AMP + diphosphate. Catalyzes the attachment of valine to tRNA(Val). As ValRS can inadvertently accommodate and process structurally similar amino acids such as threonine, to avoid such errors, it has a 'posttransfer' editing activity that hydrolyzes mischarged Thr-tRNA(Val) in a tRNA-dependent manner. The polypeptide is Valine--tRNA ligase (Solibacter usitatus (strain Ellin6076)).